A 548-amino-acid chain; its full sequence is Chaperonin GroEL (548 aa).

Residues 30–33 (TLGP), Lys-51, 87–91 (DGTTT), Gly-415, 479–481 (NAA), and Asp-495 contribute to the ATP site.

The protein belongs to the chaperonin (HSP60) family. In terms of assembly, forms a cylinder of 14 subunits composed of two heptameric rings stacked back-to-back. Interacts with the co-chaperonin GroES.

It localises to the cytoplasm. It catalyses the reaction ATP + H2O + a folded polypeptide = ADP + phosphate + an unfolded polypeptide.. Together with its co-chaperonin GroES, plays an essential role in assisting protein folding. The GroEL-GroES system forms a nano-cage that allows encapsulation of the non-native substrate proteins and provides a physical environment optimized to promote and accelerate protein folding. The polypeptide is Chaperonin GroEL (Sodalis glossinidius (strain morsitans)).